A 193-amino-acid chain; its full sequence is Ion-translocating oxidoreductase complex subunit A (193 aa).

6 consecutive transmembrane segments (helical) span residues 4–24 (LLLI…RFLG), 39–59 (LGMG…TWVL), 72–92 (LQTI…EMIV), 102–122 (SLGI…LAVL), 134–154 (LVFA…FAGL), and 171–191 (PIEL…AGLV).

It belongs to the NqrDE/RnfAE family. In terms of assembly, the complex is composed of six subunits: RnfA, RnfB, RnfC, RnfD, RnfE and RnfG.

The protein localises to the cell inner membrane. Functionally, part of a membrane-bound complex that couples electron transfer with translocation of ions across the membrane. In Syntrophotalea carbinolica (strain DSM 2380 / NBRC 103641 / GraBd1) (Pelobacter carbinolicus), this protein is Ion-translocating oxidoreductase complex subunit A.